A 37-amino-acid polypeptide reads, in one-letter code: Large ribosomal subunit protein bL36c (37 aa).

The protein belongs to the bacterial ribosomal protein bL36 family.

It localises to the plastid. The protein localises to the chloroplast. In Huperzia lucidula (Shining clubmoss), this protein is Large ribosomal subunit protein bL36c.